A 428-amino-acid polypeptide reads, in one-letter code: Trigger factor (428 aa).

Residues 163–248 form the PPIase FKBP-type domain; it reads KDIVTIDFEG…VKEIKAKELP (86 aa).

It belongs to the FKBP-type PPIase family. Tig subfamily.

It is found in the cytoplasm. It catalyses the reaction [protein]-peptidylproline (omega=180) = [protein]-peptidylproline (omega=0). Functionally, involved in protein export. Acts as a chaperone by maintaining the newly synthesized protein in an open conformation. Functions as a peptidyl-prolyl cis-trans isomerase. The sequence is that of Trigger factor from Lachnoclostridium phytofermentans (strain ATCC 700394 / DSM 18823 / ISDg) (Clostridium phytofermentans).